Reading from the N-terminus, the 464-residue chain is Growth hormone-releasing hormone receptor (464 aa).

The signal sequence occupies residues 1–22 (MDSLLWATWVLCLLNLWGVALG). Residues 23–130 (HLHLECDFIT…EEKSYFSTVK (108 aa)) are Extracellular-facing. 3 disulfides stabilise this stretch: C41-C64, C55-C96, and C78-C112. N50 carries an N-linked (GlcNAc...) asparagine glycan. Residues 131–151 (IIYTTGHSISIVALCVAIAIL) form a helical membrane-spanning segment. The Cytoplasmic portion of the chain corresponds to 152–167 (VALRRLHCPRNYIHTQ). A helical membrane pass occupies residues 168–188 (LFATFILKASAVFLKDAAVFQ). At 189 to 210 (GDSTDHCSMSTILCKVSVAVSH) the chain is on the extracellular side. Residues 211–231 (FATMTNFSWLLAEAVYLSCLL) traverse the membrane as a helical segment. Residues 232–240 (ASTSPRSKP) lie on the Cytoplasmic side of the membrane. Residues 241 to 261 (AFWWLVLAGWGLPVLCTGTWV) traverse the membrane as a helical segment. Topologically, residues 262–283 (GCKLAFEDTACWDLDDSSPYWW) are extracellular. The helical transmembrane segment at 284–304 (IIKGPIVLSVGVNFGLFLNII) threads the bilayer. Topologically, residues 305–372 (CILLRKLGPA…QLPWRLSKST (68 aa)) are cytoplasmic. A helical transmembrane segment spans residues 373-393 (LLLIPLFGIHYIIFNFLPDSA). The Extracellular segment spans residues 394 to 398 (GLGIR). The helical transmembrane segment at 399-419 (LPLELGLGSFQGFVVAVLYCF) threads the bilayer. The Cytoplasmic portion of the chain corresponds to 420-464 (LNQEVRTEISRKWYGHDPELLPARRTCTEWTTPPRSRVKVLTSEC).

It belongs to the G-protein coupled receptor 2 family. Pituitary gland.

The protein localises to the cell membrane. In terms of biological role, receptor for GRF, coupled to G proteins which activate adenylyl cyclase. Stimulates somatotroph cell growth, growth hormone gene transcription and growth hormone secretion. The chain is Growth hormone-releasing hormone receptor (Ghrhr) from Rattus norvegicus (Rat).